The sequence spans 1703 residues: Ferlin 2 (1703 aa).

C2 domains follow at residues 18–141 and 207–332; these read IRKL…KTWL and KQPV…FRWF. 3 disordered regions span residues 913 to 937, 970 to 1025, and 1194 to 1228; these read NQFN…FDDN, NLDK…TSST, and KNKS…QKLG. Residues 916–928 are compositionally biased toward acidic residues; it reads NDDDEGDNEDEQD. A compositionally biased stretch (polar residues) spans 979 to 991; that stretch reads QPQSLKNLQNLDS. Residues 993 to 1009 are compositionally biased toward basic and acidic residues; sequence SKADQKSQFDLKSESKS. Residues 1198 to 1209 are compositionally biased toward low complexity; that stretch reads NRSSMSLSMRSS. Residues 1466 to 1595 enclose the C2 3 domain; it reads VARIIPPSTI…LKKLKEGIVF (130 aa). Residues 1628 to 1651 are disordered; the sequence is AAESDPVGEGQNEPNKDPILEKPK. Residues 1641–1651 show a composition bias toward basic and acidic residues; sequence PNKDPILEKPK. Residues 1681 to 1701 form a helical membrane-spanning segment; it reads FAGIFVSIVTMMILFVKPGIL.

Belongs to the ferlin family.

It is found in the membrane. In terms of biological role, regulates mucocyst exocytosis. The chain is Ferlin 2 from Tetrahymena thermophila (strain SB210).